The sequence spans 76 residues: Small ribosomal subunit protein bS18 (76 aa).

The protein belongs to the bacterial ribosomal protein bS18 family. In terms of assembly, part of the 30S ribosomal subunit. Forms a tight heterodimer with protein bS6.

In terms of biological role, binds as a heterodimer with protein bS6 to the central domain of the 16S rRNA, where it helps stabilize the platform of the 30S subunit. The chain is Small ribosomal subunit protein bS18 from Alkaliphilus metalliredigens (strain QYMF).